A 206-amino-acid polypeptide reads, in one-letter code: Dephospho-CoA kinase (206 aa).

Positions 4-204 (IVGLTGGIGS…HQYLQLANAQ (201 aa)) constitute a DPCK domain. Position 12 to 17 (12 to 17 (GSGKST)) interacts with ATP.

The protein belongs to the CoaE family.

Its subcellular location is the cytoplasm. It catalyses the reaction 3'-dephospho-CoA + ATP = ADP + CoA + H(+). The protein operates within cofactor biosynthesis; coenzyme A biosynthesis; CoA from (R)-pantothenate: step 5/5. Functionally, catalyzes the phosphorylation of the 3'-hydroxyl group of dephosphocoenzyme A to form coenzyme A. This Pasteurella multocida (strain Pm70) protein is Dephospho-CoA kinase.